We begin with the raw amino-acid sequence, 1463 residues long: DNA-directed RNA polymerase subunit beta'' (1463 aa).

The Zn(2+) site is built by C239, C312, C319, and C322. Disordered stretches follow at residues 836–869 and 987–1007; these read TFTG…ETRM and TNRS…AQAR. The segment covering 860-869 has biased composition (polar residues); it reads AANSSHETRM. A compositionally biased stretch (basic residues) spans 987-996; the sequence is TNRSKTRRNA. Over residues 997-1007 the composition is skewed to polar residues; sequence SGKTQVKAQAR.

It belongs to the RNA polymerase beta' chain family. RpoC2 subfamily. As to quaternary structure, in plastids the minimal PEP RNA polymerase catalytic core is composed of four subunits: alpha, beta, beta', and beta''. When a (nuclear-encoded) sigma factor is associated with the core the holoenzyme is formed, which can initiate transcription. It depends on Zn(2+) as a cofactor.

The protein resides in the plastid. The protein localises to the chloroplast. The enzyme catalyses RNA(n) + a ribonucleoside 5'-triphosphate = RNA(n+1) + diphosphate. Functionally, DNA-dependent RNA polymerase catalyzes the transcription of DNA into RNA using the four ribonucleoside triphosphates as substrates. In Nephroselmis olivacea (Green alga), this protein is DNA-directed RNA polymerase subunit beta''.